The following is a 468-amino-acid chain: MGTVHARSLDPLPMNGPDFGSHDDADLVEVEPQKKQEILENKDVVVQRVHFEGLGRTKDDLIAHEIGQVFKAKNLIEVMRKSHEAREKLLRLGVFRNVEVLIDTCEGEDALPNGLDVTFEVTELRRLTGSYNTMVGNNEGSMVLGLKLPNLFGRAEKMTFQFSYGTKETSYGLSFFKPQVGNFERNFSVNLYKVTGQFPWSSLRETDRGVSAEINFPIWKTSHTLKWEGVWRELGCLARTASFAIREESGHTLKSSLSHTMVIDSRNTSILPKRGALLKINQELAGYTGGDVSFLKEDFELQLNKQLAWDSVLSTSLWGGMLVPIGDKPSSIADRFYLGGPTSVRGFSMYSIGPQSEGDYLGGEAYWAGGMHLYTPLPFRPGRGGFGDLFRTHFFLNAGNLCNLNYGEGPRAHLRRLAECIRWSYGAGIVLRLGNIARLELNYCIPMGVQSGDRICDGVQFGAGIRFL.

Residues 1-24 are disordered; it reads MGTVHARSLDPLPMNGPDFGSHDD. One can recognise a POTRA domain in the interval 44–124; that stretch reads VVVQRVHFEG…LDVTFEVTEL (81 aa).

It belongs to the SAM50/omp85 family. In terms of assembly, associates with the mitochondrial contact site and cristae organizing system (MICOS) complex (also known as MINOS or MitOS complex).

Its subcellular location is the mitochondrion outer membrane. Its function is as follows. May play a role in the maintenance of the structure of mitochondrial cristae. The chain is Sorting and assembly machinery component 50 homolog (samm50) from Xenopus tropicalis (Western clawed frog).